A 235-amino-acid chain; its full sequence is Transmembrane emp24 domain-containing protein 9 (235 aa).

The N-terminal stretch at 1–37 is a signal peptide; sequence MAAVRGVRVVGTSPGLLLGRGMRAFLLLLCLAARGGA. The Lumenal portion of the chain corresponds to 38–202; that stretch reads LYFHIGETEK…RQTSESTNQR (165 aa). The GOLD domain occupies 47-145; that stretch reads KKCFIEEIPD…MLRVHLDIQV (99 aa). Residues 121 to 160 are required for interaction with STX17; the sequence is CLHSNSTKFSLFAGGMLRVHLDIQVGEHANDYAEIAAKDK. Asn-125 carries an N-linked (GlcNAc...) asparagine glycan. Positions 154-184 form a coiled coil; that stretch reads EIAAKDKLSELQLRVRQLVEQVEQIQKEQNY. Lys-160 carries the post-translational modification N6-acetyllysine. Residues 203-222 traverse the membrane as a helical segment; it reads VLWWSILQTLILVAIGVWQM. The Cytoplasmic portion of the chain corresponds to 223 to 235; that stretch reads RHLKSFFEAKKLV. The COPII vesicle coat-binding motif lies at 228–229; it reads FF. The COPI vesicle coat-binding motif lies at 228 to 235; that stretch reads FFEAKKLV.

This sequence belongs to the EMP24/GP25L family. In terms of assembly, monomer and homodimer in endoplasmic reticulum. Predominantly monomeric and to lesser extent homodimeric in endoplasmic reticulum-Golgi intermediate compartment and cis-Golgi network. Probably oligomerizes with other members of the EMP24/GP25L family such as TMED2, TMED7 and TMED10. Interacts with TMED5. Interacts (via C-terminus) with COPG1; the interaction involves dimeric TMED9. Interacts with PTPN2 and SPAST. Interacts with STX17; the interaction is direct. N-linked glycosylated containing high mannose.

It localises to the endoplasmic reticulum membrane. Its subcellular location is the golgi apparatus. The protein resides in the cis-Golgi network membrane. The protein localises to the endoplasmic reticulum-Golgi intermediate compartment membrane. It is found in the trans-Golgi network membrane. In terms of biological role, appears to be involved in vesicular protein trafficking, mainly in the early secretory pathway. In COPI vesicle-mediated retrograde transport involved in the coatomer recruitment to membranes of the early secretory pathway. Increases coatomer-dependent activity of ARFGAP2. Thought to play a crucial role in the specific retention of p24 complexes in cis-Golgi membranes; specifically contributes to the coupled localization of TMED2 and TMED10 in the cis-Golgi network. May be involved in organization of intracellular membranes, such as of the ER-Golgi intermediate compartment and the Golgi apparatus. Involved in ER localization of PTPN2. The chain is Transmembrane emp24 domain-containing protein 9 (Tmed9) from Rattus norvegicus (Rat).